A 350-amino-acid polypeptide reads, in one-letter code: Hydroxymethylglutaryl-CoA synthase (350 aa).

Asp-30 contacts (3S)-3-hydroxy-3-methylglutaryl-CoA. The Proton donor/acceptor role is filled by Glu-82. Cys-114, Ser-155, Thr-203, and His-236 together coordinate (3S)-3-hydroxy-3-methylglutaryl-CoA. Cys-114 (acyl-thioester intermediate) is an active-site residue. His-236 serves as the catalytic Proton donor/acceptor. Arg-241 provides a ligand contact to CoA. 3 residues coordinate (3S)-3-hydroxy-3-methylglutaryl-CoA: Arg-245, Asn-268, and Ser-298.

The protein belongs to the thiolase-like superfamily. Archaeal HMG-CoA synthase family. As to quaternary structure, interacts with acetoacetyl-CoA thiolase that catalyzes the precedent step in the pathway and with a DUF35 protein. The acetoacetyl-CoA thiolase/HMG-CoA synthase complex channels the intermediate via a fused CoA-binding site, which allows for efficient coupling of the endergonic thiolase reaction with the exergonic HMGCS reaction.

The catalysed reaction is acetoacetyl-CoA + acetyl-CoA + H2O = (3S)-3-hydroxy-3-methylglutaryl-CoA + CoA + H(+). It participates in metabolic intermediate biosynthesis; (R)-mevalonate biosynthesis; (R)-mevalonate from acetyl-CoA: step 2/3. Functionally, catalyzes the condensation of acetyl-CoA with acetoacetyl-CoA to form 3-hydroxy-3-methylglutaryl-CoA (HMG-CoA). Functions in the mevalonate (MVA) pathway leading to isopentenyl diphosphate (IPP), a key precursor for the biosynthesis of isoprenoid compounds that are building blocks of archaeal membrane lipids. The chain is Hydroxymethylglutaryl-CoA synthase from Pyrobaculum calidifontis (strain DSM 21063 / JCM 11548 / VA1).